Reading from the N-terminus, the 745-residue chain is Jacalin-related lectin 4 (745 aa).

5 Jacalin-type lectin domains span residues 2 to 148 (AQKL…YFAP), 151 to 294 (PTKF…YFSP), 307 to 448 (AEKL…YFVT), 451 to 594 (PTKF…YFSR), and 601 to 744 (AETL…YVMP).

It belongs to the jacalin lectin family.

The polypeptide is Jacalin-related lectin 4 (JAL4) (Arabidopsis thaliana (Mouse-ear cress)).